A 371-amino-acid polypeptide reads, in one-letter code: Probable beta-1,4-xylosyltransferase GT43A (371 aa).

The Cytoplasmic segment spans residues 1–19; the sequence is MGTAAVAAAERPKQRRSSH. The helical; Signal-anchor for type II membrane protein transmembrane segment at 20–42 threads the bilayer; it reads LWKKALLHFSLCFVMGFFTGFAP. Residues 43–371 are Lumenal-facing; it reads SSSSSWRAGS…TSTPKTHNRR (329 aa). N-linked (GlcNAc...) asparagine glycosylation is found at Asn-176 and Asn-299.

This sequence belongs to the glycosyltransferase 43 family.

The protein resides in the golgi apparatus membrane. Functionally, probable beta-1,4-xylosyltransferase involved in xylan biosynthesis in cell walls. This is Probable beta-1,4-xylosyltransferase GT43A from Oryza sativa subsp. japonica (Rice).